Reading from the N-terminus, the 29-residue chain is ShK homolog Ask132958 (29 aa).

The ShKT domain occupies 1–29 (CENTISGCSRADCLLTHRKQGCQKTCGLC). 3 disulfides stabilise this stretch: cysteine 1/cysteine 29, cysteine 8/cysteine 22, and cysteine 13/cysteine 26.

Belongs to the sea anemone type 1 potassium channel toxin family. Type 1a subfamily.

The protein resides in the secreted. The protein localises to the nematocyst. In terms of biological role, this peptide is similar to the potassium channel toxin ShK, but does not show activity on potassium channels. It appears that Lys-19, which is expected to occupy the pore of the channel, is not sufficiently accessible for binding, and therefore that this peptide must have a distinct functional role that does not involve potassium channels. It is noteworthy that this peptide is much more stable in the presence of trypsin, chymotrypsin and pepsin than the toxin ShK. This is ShK homolog Ask132958 from Anemonia sulcata (Mediterranean snakelocks sea anemone).